A 215-amino-acid chain; its full sequence is MAMSLKAEKRPDLRGSVTRKIRKQGYVPAVVYGNKTKSQPISVEAVDFLKTVREVGRNGLISLEVEKGTKHQVMVHDLQMDPLKGDYLHIDFFEVDMSSEIEANVPVRLTGEARGVSEGGVLSQLMYEITVRSLPADIPEEITLDVSSLAIGDSIQIRDVRGNVPVQVVNEDEETVVTVQPPATEKEEETEAAVTDSEPEVINEKEEPAEEAKEE.

The segment at 174–215 (ETVVTVQPPATEKEEETEAAVTDSEPEVINEKEEPAEEAKEE) is disordered. Positions 186 to 215 (KEEETEAAVTDSEPEVINEKEEPAEEAKEE) are enriched in acidic residues.

It belongs to the bacterial ribosomal protein bL25 family. CTC subfamily. Part of the 50S ribosomal subunit; part of the 5S rRNA/L5/L18/L25 subcomplex. Contacts the 5S rRNA. Binds to the 5S rRNA independently of L5 and L18.

Its function is as follows. This is one of the proteins that binds to the 5S RNA in the ribosome where it forms part of the central protuberance. This Halalkalibacterium halodurans (strain ATCC BAA-125 / DSM 18197 / FERM 7344 / JCM 9153 / C-125) (Bacillus halodurans) protein is Large ribosomal subunit protein bL25.